Here is a 138-residue protein sequence, read N- to C-terminus: Basic phospholipase A2 Tbo-G6D49 (138 aa).

The N-terminal stretch at 1 to 16 (MRTLWIMAVLLVGVEG) is a signal peptide. 7 disulfides stabilise this stretch: cysteine 42/cysteine 131, cysteine 44/cysteine 60, cysteine 59/cysteine 111, cysteine 65/cysteine 138, cysteine 66/cysteine 104, cysteine 73/cysteine 97, and cysteine 91/cysteine 102. Ca(2+) contacts are provided by tyrosine 43, glycine 45, and glycine 47. Residue histidine 63 is part of the active site. Residue aspartate 64 coordinates Ca(2+). The active site involves aspartate 105.

In terms of assembly, monomer. Ca(2+) is required as a cofactor. Expressed by the venom gland.

Its subcellular location is the secreted. The enzyme catalyses a 1,2-diacyl-sn-glycero-3-phosphocholine + H2O = a 1-acyl-sn-glycero-3-phosphocholine + a fatty acid + H(+). In terms of biological role, snake venom phospholipase A2 (PLA2) that impairs hemostasis. It weakly inhibits ADP-induced platelet aggregation when tested on platelet rich plasma from human and rabbit blood (15-25% of inhibition at 5-10 ug of enzyme), and dose-dependently inhibits blood coagulation, possibly by inhibiting thrombin activation. Exhibits strong hydrolytic activities toward L-dipalmitoyl phosphatidylcholine. PLA2 catalyzes the calcium-dependent hydrolysis of the 2-acyl groups in 3-sn-phosphoglycerides. The sequence is that of Basic phospholipase A2 Tbo-G6D49 from Craspedocephalus borneensis (Borneo pit viper).